We begin with the raw amino-acid sequence, 155 residues long: Microsomal glutathione S-transferase 1 (155 aa).

Over 3 to 9 the chain is Lumenal; that stretch reads DLTELMK. The helical transmembrane segment at 10–33 threads the bilayer; the sequence is NEVFMAFASYATIVLSKMMFMSTA. The Cytoplasmic portion of the chain corresponds to 34 to 62; the sequence is TAFYRLTRKVFANPEDCSSFGKGENAKKY. Arginine 38 contributes to the glutathione binding site. Lysine 42, lysine 55, and lysine 60 each carry N6-acetyllysine. The helical transmembrane segment at 63–96 threads the bilayer; sequence LRTDERVERVRRAHLNDLENIVPFLGIGLLYSLS. Residues arginine 73, arginine 74, histidine 76, and glutamate 81 each coordinate glutathione. Residues 97–99 lie on the Lumenal side of the membrane; the sequence is GPD. The chain crosses the membrane as a helical span at residues 100-123; sequence LSTAILHFRLFVGARIYHTIAYLT. Tyrosine 121 contacts glutathione. Topologically, residues 124 to 128 are cytoplasmic; that stretch reads PLPQP. A helical membrane pass occupies residues 129 to 148; the sequence is NRGLAFFLGYGVTLSMAYRL. Residues 149 to 155 lie on the Lumenal side of the membrane; that stretch reads LKSRLYL.

Belongs to the MAPEG family. As to quaternary structure, homotrimer; The trimer binds only one molecule of glutathione.

It localises to the endoplasmic reticulum membrane. It is found in the mitochondrion outer membrane. It carries out the reaction RX + glutathione = an S-substituted glutathione + a halide anion + H(+). Conjugation of reduced glutathione to a wide number of exogenous and endogenous hydrophobic electrophiles. The protein is Microsomal glutathione S-transferase 1 (MGST1) of Sus scrofa (Pig).